A 405-amino-acid polypeptide reads, in one-letter code: Phosphoglycerate kinase (405 aa).

Residues 21–23, Arg38, 59–62, Arg116, and Arg156 contribute to the substrate site; these read DFN and HQSR. ATP contacts are provided by residues Glu330 and 355–358; that span reads GGHT.

Belongs to the phosphoglycerate kinase family. In terms of assembly, monomer.

Its subcellular location is the cytoplasm. It carries out the reaction (2R)-3-phosphoglycerate + ATP = (2R)-3-phospho-glyceroyl phosphate + ADP. It participates in carbohydrate degradation; glycolysis; pyruvate from D-glyceraldehyde 3-phosphate: step 2/5. This is Phosphoglycerate kinase from Methanocorpusculum labreanum (strain ATCC 43576 / DSM 4855 / Z).